Reading from the N-terminus, the 289-residue chain is Bis(5'-nucleosyl)-tetraphosphatase, symmetrical (289 aa).

Belongs to the Ap4A hydrolase family.

The catalysed reaction is P(1),P(4)-bis(5'-adenosyl) tetraphosphate + H2O = 2 ADP + 2 H(+). In terms of biological role, hydrolyzes diadenosine 5',5'''-P1,P4-tetraphosphate to yield ADP. This is Bis(5'-nucleosyl)-tetraphosphatase, symmetrical from Yersinia pestis bv. Antiqua (strain Antiqua).